The primary structure comprises 463 residues: Putative ankyrin repeat protein R579 (463 aa).

ANK repeat units lie at residues Leu-124–Ile-154, Ser-156–Ile-181, Lys-242–Pro-271, Ile-273–Pro-299, His-300–Glu-328, Asn-329–Asp-355, Ile-356–Thr-385, and Gly-387–Leu-416.

In Acanthamoeba polyphaga (Amoeba), this protein is Putative ankyrin repeat protein R579.